Here is a 142-residue protein sequence, read N- to C-terminus: Hemoglobin subunit alpha-5 (142 aa).

One can recognise a Globin domain in the interval 2–142; the sequence is TFSSAEKAAI…VSAVLVSKYR (141 aa). Position 59 (His59) interacts with O2. His88 is a heme b binding site.

The protein belongs to the globin family. As to quaternary structure, heterotetramer of two alpha chains and two beta chains. Red blood cells.

In terms of biological role, this is a larval (tadpole) alpha-globin. This is Hemoglobin subunit alpha-5 (hba5) from Xenopus laevis (African clawed frog).